The primary structure comprises 856 residues: Histone-lysine N-methyltransferase EZA1 (856 aa).

Residues 1–11 (MVTDDSNSSGR) show a composition bias toward polar residues. Disordered regions lie at residues 1 to 34 (MVTDDSNSSGRIKSHVDDDDDGEEEEDRLEGLEN), 66 to 87 (VSPFSSAASSRATAEDNGNSNM), and 366 to 473 (NVDS…HHGS). Residues 17–28 (DDDDDGEEEEDR) show a composition bias toward acidic residues. Residues 22–49 (GEEEEDRLEGLENRLSELKRKIQGERVR) adopt a coiled-coil conformation. Residues 68 to 87 (PFSSAASSRATAEDNGNSNM) show a composition bias toward polar residues. Basic and acidic residues predominate over residues 374–392 (EQEHGIRGKREVPILKDSN). Residues 393-419 (DLPNLSNKKQKTAASDTKMSFVNSVPS) are compositionally biased toward polar residues. The span at 438 to 451 (KVNRDSEADAKEVG) shows a compositional bias: basic and acidic residues. The SANT domain maps to 489-539 (PSTEWNPIEKDLYLKGVEIFGRNSCLIARNLLSGLKTCLDVSNYMRENEVS). The 100-residue stretch at 594-693 (WKRIAGGKNQ…SLGEAPRRGE (100 aa)) folds into the CXC domain. The region spanning 707-822 (QRILLGKSDV…ASEELFYDYR (116 aa)) is the SET domain. Residue Tyr-821 coordinates S-adenosyl-L-methionine. The segment at 827–856 (QAPVWARKPEGSKKDDSAITHRRARKHQSH) is disordered. Basic and acidic residues predominate over residues 833-845 (RKPEGSKKDDSAI). A Nuclear localization signal motif is present at residues 838–845 (SKKDDSAI). Positions 846–856 (THRRARKHQSH) are enriched in basic residues.

It belongs to the class V-like SAM-binding methyltransferase superfamily. Histone-lysine methyltransferase family. EZ subfamily. In terms of assembly, component of the plant homeodomain / polycomb repressive complex 2 (PHD-PRC2) large complex during prolonged cold, composed of core PRC2 components (VRN2, EZA1, FIE and MSI1), and three related PHD finger proteins (VIL1, VIL2 and VIN3) that mediates histone H3 trimethylation on 'Lys-27' H3K27me3. Interacts with TAF13. Interacts with EOL1. Interacts (via SANT domain) with HXK1 in the nucleus.

It is found in the nucleus. It carries out the reaction L-lysyl(27)-[histone H3] + 3 S-adenosyl-L-methionine = N(6),N(6),N(6)-trimethyl-L-lysyl(27)-[histone H3] + 3 S-adenosyl-L-homocysteine + 3 H(+). Its function is as follows. Polycomb group (PcG) protein. Catalytic subunit of some PcG multiprotein complex, which methylates 'Lys-27' of histone H3, leading to transcriptional repression of the affected target genes, mainly abscisic acid (ABA) responsive elements. PcG proteins act by forming multiprotein complexes, which are required to maintain the transcriptionally repressive state of homeotic genes throughout development. PcG proteins are not required to initiate repression, but to maintain it during later stages of development. Forms a nuclear complex with CLF and HXK1 to target common glucose-responsive genes and regulate glucose signaling by glucose-mediated gene repression. Affects the recruitment of HXK1 to the target chromatin. This is Histone-lysine N-methyltransferase EZA1 from Arabidopsis thaliana (Mouse-ear cress).